The chain runs to 84 residues: Large ribosomal subunit protein bL27 (84 aa).

Positions 1–22 are disordered; the sequence is MAHKKAGGSTRNGRDSESKRLG.

This sequence belongs to the bacterial ribosomal protein bL27 family.

In Shewanella woodyi (strain ATCC 51908 / MS32), this protein is Large ribosomal subunit protein bL27.